The following is a 56-amino-acid chain: Large ribosomal subunit protein bL32A (56 aa).

The disordered stretch occupies residues 1-56 (MAVPARRTSKAKKNKRRTHKGLTAPGLSRDSETGEYRMSHRISPDGTYKGRTIIEK). Over residues 7-20 (RTSKAKKNKRRTHK) the composition is skewed to basic residues. Residues 29–38 (RDSETGEYRM) are compositionally biased toward basic and acidic residues.

Belongs to the bacterial ribosomal protein bL32 family.

The sequence is that of Large ribosomal subunit protein bL32A (rpmF1) from Listeria innocua serovar 6a (strain ATCC BAA-680 / CLIP 11262).